Consider the following 246-residue polypeptide: Vacuolar iron transporter 2 (246 aa).

Over 1–32 (MVKEFVQDEEKQRLLLDEHTEKHFTAGEVVRD) the chain is Cytoplasmic. A helical transmembrane segment spans residues 33–53 (IIIGVSDGLTVPFALAAGLSG). Over 54 to 58 (ANAPS) the chain is Vacuolar. Residues 59 to 79 (ALVLTAGLAEVAAGAISMGLG) traverse the membrane as a helical segment. Topologically, residues 80–164 (GYLAAKSDAD…PEPRRALMSA (85 aa)) are cytoplasmic. A cytoplasmic metal binding domain (MBD) region spans residues 86–161 (SDADHYHREL…LEKPEPRRAL (76 aa)). Positions 98, 101, 109, 112, 145, and 149 each coordinate Fe cation. Residues 165-185 (GTIALAYVVGGLVPLLPYMFV) form a helical membrane-spanning segment. Residues 186–190 (PTADR) lie on the Vacuolar side of the membrane. The chain crosses the membrane as a helical span at residues 191 to 211 (AMATSVVVTLAALLFFGYVKG). The Cytoplasmic segment spans residues 212–218 (RFTGNRP). Residues 219–239 (FISAFQTAVIGALASAAAFGM) traverse the membrane as a helical segment. At 240 to 246 (AKAVQSI) the chain is on the vacuolar side.

It belongs to the CCC1 family. Homodimer. The dimeric interaction is mediated by both the transmembrane domains (TMDs) and the cytoplasmic metal binding domain (MBD). As to expression, expressed in leaf sheaths and at lower level in leaf blades.

It is found in the vacuole membrane. It carries out the reaction Fe(2+)(in) = Fe(2+)(out). Its function is as follows. Vacuolar iron transporter involved in the transfer of iron ions from the cytosol to the vacuole for intracellular iron storage. Vacuolar iron storage is required for seed embryo and seedling development. May be involved in the regulation of iron translocation between flag leaves and seeds. Can transport zinc ions from the cytosol to the vacuole. The protein is Vacuolar iron transporter 2 of Oryza sativa subsp. japonica (Rice).